The sequence spans 492 residues: Probable cobyric acid synthase (492 aa).

In terms of domain architecture, GATase cobBQ-type spans 252 to 444; it reads PIEVNIVKFS…FHGILENFEF (193 aa). Cysteine 330 (nucleophile) is an active-site residue. Residue histidine 436 is part of the active site.

Belongs to the CobB/CobQ family. CobQ subfamily.

It functions in the pathway cofactor biosynthesis; adenosylcobalamin biosynthesis. Functionally, catalyzes amidations at positions B, D, E, and G on adenosylcobyrinic A,C-diamide. NH(2) groups are provided by glutamine, and one molecule of ATP is hydrogenolyzed for each amidation. The polypeptide is Probable cobyric acid synthase (Methanococcus maripaludis (strain C7 / ATCC BAA-1331)).